The primary structure comprises 160 residues: S-ribosylhomocysteine lyase (160 aa).

His-57, His-61, and Cys-127 together coordinate Fe cation.

The protein belongs to the LuxS family. In terms of assembly, homodimer. The cofactor is Fe cation.

It carries out the reaction S-(5-deoxy-D-ribos-5-yl)-L-homocysteine = (S)-4,5-dihydroxypentane-2,3-dione + L-homocysteine. In terms of biological role, involved in the synthesis of autoinducer 2 (AI-2) which is secreted by bacteria and is used to communicate both the cell density and the metabolic potential of the environment. The regulation of gene expression in response to changes in cell density is called quorum sensing. Catalyzes the transformation of S-ribosylhomocysteine (RHC) to homocysteine (HC) and 4,5-dihydroxy-2,3-pentadione (DPD). The sequence is that of S-ribosylhomocysteine lyase from Streptococcus uberis (strain ATCC BAA-854 / 0140J).